The sequence spans 514 residues: 2,3-bisphosphoglycerate-independent phosphoglycerate mutase (514 aa).

Mn(2+) is bound by residues D13 and S63. S63 acts as the Phosphoserine intermediate in catalysis. Substrate contacts are provided by residues H124, 154–155 (RD), R186, R192, 258–261 (RADR), and K332. Mn(2+) is bound by residues D399, H403, D440, H441, and H459.

It belongs to the BPG-independent phosphoglycerate mutase family. As to quaternary structure, monomer. Requires Mn(2+) as cofactor.

It carries out the reaction (2R)-2-phosphoglycerate = (2R)-3-phosphoglycerate. The protein operates within carbohydrate degradation; glycolysis; pyruvate from D-glyceraldehyde 3-phosphate: step 3/5. Functionally, catalyzes the interconversion of 2-phosphoglycerate and 3-phosphoglycerate. The polypeptide is 2,3-bisphosphoglycerate-independent phosphoglycerate mutase (Legionella pneumophila subsp. pneumophila (strain Philadelphia 1 / ATCC 33152 / DSM 7513)).